Reading from the N-terminus, the 259-residue chain is Zinc import ATP-binding protein ZnuC (259 aa).

The region spanning 11 to 225 is the ABC transporter domain; sequence IRLENIYVHR…PEYLAIFGGQ (215 aa). 43-50 is a binding site for ATP; sequence GPNGAGKS.

It belongs to the ABC transporter superfamily. Zinc importer (TC 3.A.1.15.5) family. In terms of assembly, the complex is composed of two ATP-binding proteins (ZnuC), two transmembrane proteins (ZnuB) and a solute-binding protein (ZnuA).

It localises to the cell inner membrane. The catalysed reaction is Zn(2+)(out) + ATP(in) + H2O(in) = Zn(2+)(in) + ADP(in) + phosphate(in) + H(+)(in). Its function is as follows. Part of the ABC transporter complex ZnuABC involved in zinc import. Responsible for energy coupling to the transport system. The sequence is that of Zinc import ATP-binding protein ZnuC from Acinetobacter baylyi (strain ATCC 33305 / BD413 / ADP1).